A 177-amino-acid chain; its full sequence is Peptidyl-tRNA hydrolase (177 aa).

Tyr-14 provides a ligand contact to tRNA. The active-site Proton acceptor is the His-19. TRNA contacts are provided by Phe-64, Asn-66, and Asn-112.

Belongs to the PTH family. In terms of assembly, monomer.

It is found in the cytoplasm. It catalyses the reaction an N-acyl-L-alpha-aminoacyl-tRNA + H2O = an N-acyl-L-amino acid + a tRNA + H(+). Hydrolyzes ribosome-free peptidyl-tRNAs (with 1 or more amino acids incorporated), which drop off the ribosome during protein synthesis, or as a result of ribosome stalling. Functionally, catalyzes the release of premature peptidyl moieties from peptidyl-tRNA molecules trapped in stalled 50S ribosomal subunits, and thus maintains levels of free tRNAs and 50S ribosomes. This is Peptidyl-tRNA hydrolase from Latilactobacillus sakei (Lactobacillus sakei).